Reading from the N-terminus, the 88-residue chain is Apolipoprotein C-I (88 aa).

Positions 1–26 (MRLFIALPVLIVVVAMALEGPAPAQA) are cleaved as a signal peptide.

It belongs to the apolipoprotein C1 family.

The protein resides in the secreted. Its function is as follows. Inhibitor of lipoprotein binding to the low density lipoprotein (LDL) receptor, LDL receptor-related protein, and very low density lipoprotein (VLDL) receptor. Associates with high density lipoproteins (HDL) and the triacylglycerol-rich lipoproteins in the plasma and makes up about 10% of the protein of the VLDL and 2% of that of HDL. Appears to interfere directly with fatty acid uptake and is also the major plasma inhibitor of cholesteryl ester transfer protein (CETP). Binds free fatty acids and reduces their intracellular esterification. Modulates the interaction of APOE with beta-migrating VLDL and inhibits binding of beta-VLDL to the LDL receptor-related protein. The protein is Apolipoprotein C-I (Apoc1) of Rattus norvegicus (Rat).